An 84-amino-acid chain; its full sequence is MPIIKSAIERVRVNEKAAARNASQMSAMRTAIKKFDKAKLAGADNLDDLYKAAISAIDHAHSKGLIKANKAARDKSRLSARYAK.

Belongs to the bacterial ribosomal protein bS20 family.

Functionally, binds directly to 16S ribosomal RNA. The chain is Small ribosomal subunit protein bS20 from Limosilactobacillus fermentum (strain NBRC 3956 / LMG 18251) (Lactobacillus fermentum).